The sequence spans 530 residues: Autoinducer-2 kinase (530 aa).

Belongs to the FGGY kinase family.

It is found in the cytoplasm. The catalysed reaction is (S)-4,5-dihydroxypentane-2,3-dione + ATP = (2S)-2-hydroxy-3,4-dioxopentyl phosphate + ADP + H(+). Functionally, catalyzes the phosphorylation of autoinducer-2 (AI-2) to phospho-AI-2, which subsequently inactivates the transcriptional regulator LsrR and leads to the transcription of the lsr operon. Phosphorylates the ring-open form of (S)-4,5-dihydroxypentane-2,3-dione (DPD), which is the precursor to all AI-2 signaling molecules, at the C5 position. This is Autoinducer-2 kinase from Yersinia pestis bv. Antiqua (strain Angola).